Here is a 358-residue protein sequence, read N- to C-terminus: DNA integrity scanning protein DisA (358 aa).

The region spanning 9–147 (KQDLSEILQF…ENMKYILKDI (139 aa)) is the DAC domain. Residues Gly-76, Leu-94, and 107–111 (MRHRT) each bind ATP.

Belongs to the DisA family. In terms of assembly, homooctamer. Requires Mg(2+) as cofactor.

It carries out the reaction 2 ATP = 3',3'-c-di-AMP + 2 diphosphate. Participates in a DNA-damage check-point that is active prior to asymmetric division when DNA is damaged. DisA forms globular foci that rapidly scan along the chromosomes during sporulation, searching for lesions. When a lesion is present, DisA pauses at the lesion site. This triggers a cellular response that culminates in a temporary block in sporulation initiation. In terms of biological role, also has diadenylate cyclase activity, catalyzing the condensation of 2 ATP molecules into cyclic di-AMP (c-di-AMP). c-di-AMP acts as a signaling molecule that couples DNA integrity with progression of sporulation. The rise in c-di-AMP level generated by DisA while scanning the chromosome, operates as a positive signal that advances sporulation; upon encountering a lesion, the DisA focus arrests at the damaged site and halts c-di-AMP synthesis. The sequence is that of DNA integrity scanning protein DisA from Bacillus licheniformis (strain ATCC 14580 / DSM 13 / JCM 2505 / CCUG 7422 / NBRC 12200 / NCIMB 9375 / NCTC 10341 / NRRL NRS-1264 / Gibson 46).